We begin with the raw amino-acid sequence, 122 residues long: UPF0344 protein BcerKBAB4_1054 (122 aa).

Helical transmembrane passes span 6–26, 38–58, 65–85, and 92–112; these read ITAW…YSAG, LMYI…VKTA, WYGM…MVLV, and PTGA…YLGL.

Belongs to the UPF0344 family.

The protein resides in the cell membrane. The protein is UPF0344 protein BcerKBAB4_1054 of Bacillus mycoides (strain KBAB4) (Bacillus weihenstephanensis).